A 272-amino-acid polypeptide reads, in one-letter code: Regulatory protein RecX (272 aa).

It belongs to the RecX family.

It localises to the cytoplasm. Modulates RecA activity. This chain is Regulatory protein RecX, found in Oceanobacillus iheyensis (strain DSM 14371 / CIP 107618 / JCM 11309 / KCTC 3954 / HTE831).